Here is a 101-residue protein sequence, read N- to C-terminus: Large ribosomal subunit protein uL23 (101 aa).

Belongs to the universal ribosomal protein uL23 family. Part of the 50S ribosomal subunit. Contacts protein L29, and trigger factor when it is bound to the ribosome.

One of the early assembly proteins it binds 23S rRNA. One of the proteins that surrounds the polypeptide exit tunnel on the outside of the ribosome. Forms the main docking site for trigger factor binding to the ribosome. This Mannheimia succiniciproducens (strain KCTC 0769BP / MBEL55E) protein is Large ribosomal subunit protein uL23.